Consider the following 276-residue polypeptide: Shikimate dehydrogenase (NADP(+)) (276 aa).

Shikimate contacts are provided by residues 15-17 (SKS) and Thr62. Lys66 (proton acceptor) is an active-site residue. The shikimate site is built by Asn87 and Asp103. Residues 127-131 (GAGGA), 151-156 (NRTLSK), and Met215 each bind NADP(+). Tyr217 is a shikimate binding site. Gly239 contacts NADP(+).

Belongs to the shikimate dehydrogenase family. In terms of assembly, homodimer.

It catalyses the reaction shikimate + NADP(+) = 3-dehydroshikimate + NADPH + H(+). It participates in metabolic intermediate biosynthesis; chorismate biosynthesis; chorismate from D-erythrose 4-phosphate and phosphoenolpyruvate: step 4/7. In terms of biological role, involved in the biosynthesis of the chorismate, which leads to the biosynthesis of aromatic amino acids. Catalyzes the reversible NADPH linked reduction of 3-dehydroshikimate (DHSA) to yield shikimate (SA). This is Shikimate dehydrogenase (NADP(+)) from Cellvibrio japonicus (strain Ueda107) (Pseudomonas fluorescens subsp. cellulosa).